Here is a 247-residue protein sequence, read N- to C-terminus: 1-(5-phosphoribosyl)-5-[(5-phosphoribosylamino)methylideneamino] imidazole-4-carboxamide isomerase 2 (247 aa).

E8 functions as the Proton acceptor in the catalytic mechanism. D128 (proton donor) is an active-site residue.

This sequence belongs to the HisA/HisF family.

Its subcellular location is the cytoplasm. The enzyme catalyses 1-(5-phospho-beta-D-ribosyl)-5-[(5-phospho-beta-D-ribosylamino)methylideneamino]imidazole-4-carboxamide = 5-[(5-phospho-1-deoxy-D-ribulos-1-ylimino)methylamino]-1-(5-phospho-beta-D-ribosyl)imidazole-4-carboxamide. It functions in the pathway amino-acid biosynthesis; L-histidine biosynthesis; L-histidine from 5-phospho-alpha-D-ribose 1-diphosphate: step 4/9. This is 1-(5-phosphoribosyl)-5-[(5-phosphoribosylamino)methylideneamino] imidazole-4-carboxamide isomerase 2 from Ruegeria pomeroyi (strain ATCC 700808 / DSM 15171 / DSS-3) (Silicibacter pomeroyi).